Consider the following 199-residue polypeptide: Large ribosomal subunit protein bL17 (199 aa).

Positions 123-199 (DEANRARRAA…EESEAKDDTK (77 aa)) are disordered. Positions 137 to 152 (KADERADEKADEKAEE) are enriched in basic and acidic residues. Residues 153-199 (TVEETTEAPAEESTEAAAEETVEETTEAPAEESTEAAEESEAKDDTK) are compositionally biased toward acidic residues.

The protein belongs to the bacterial ribosomal protein bL17 family. In terms of assembly, part of the 50S ribosomal subunit. Contacts protein L32.

The chain is Large ribosomal subunit protein bL17 from Mycolicibacterium smegmatis (strain ATCC 700084 / mc(2)155) (Mycobacterium smegmatis).